The sequence spans 319 residues: Transcription factor jun-1 (319 aa).

Disordered stretches follow at residues 1–52 (MEED…EKES) and 216–264 (NGVN…CRQK). The segment covering 8-19 (PPSSSTSSESPE) has biased composition (low complexity). The span at 28–38 (PTRRRKNSKKD) shows a compositional bias: basic residues. Positions 244–285 (KKKLERKRARNRQAATKCRQKKMDRIKELEEQVLHEKHRGQR) are basic motif. The 64-residue stretch at 244-307 (KKKLERKRAR…EHFRRTVEHH (64 aa)) folds into the bZIP domain. The segment at 286-293 (LDAELLEL) is leucine-zipper.

The protein belongs to the bZIP family. Jun subfamily. In terms of assembly, heterodimer; with fos-1. As to expression, isoform a, isoform b, isoform c and isoform d are expressed in the spermatheca.

It localises to the nucleus. Transcription factor that recognizes and binds to the AP-1 non-canonical enhancer heptamer motif 5'-TTAGTCA-3'. Required for ovulation. Controls plc-1 expression in the spermatheca to regulate spermathecal valve dilation. This Caenorhabditis elegans protein is Transcription factor jun-1.